Reading from the N-terminus, the 381-residue chain is 2-oxoglutarate-dependent dioxygenase FGSG_00048 (381 aa).

This sequence belongs to the iron/ascorbate-dependent oxidoreductase family. It depends on Fe(2+) as a cofactor.

Its pathway is mycotoxin biosynthesis. 2-oxoglutarate-dependent dioxygenase; part of the gene cluster that mediates the biosynthesis of gramillins A and B, bicyclic lipopeptides that induce cell death in maize leaves but not in wheat leaves. The nonribosomal peptide synthetase GRA1 incorporates respectively a glutamic adic (Glu), a leucine (Leu), a serine (Ser), a hydroxyglutamine (HOGln), a 2-amino decanoic acid, and 2 cysteins (CysB and CysA). The biosynthesis of 2-amino decanoic acid incorporated in gramillins could be initiated by a fatty acid synthase composed of the alpha and beta subunits FGSG_00036 and FGSG_11656. The cytochrome P450 monooxygenase FGSG_15680 could hydroxylate the fatty acid chain. Subsequent oxidation to the ketone by the oxidoreductase FGSG_00048 and transamination by aminotransferase FGSG_00049 could form 2-amino-decanoic acid. On the other hand, FGSG_15680 could also be responsible for the HO-modified glutamine at the gamma-position. Whether hydroxylation occurs on the fully assembled product or on the Gln residue prior to assembly into the gramillins requires further proof. The thioredoxin FGSG_00043 could also be required for the disulfide-bond formation between CysA and CysB. The specific involvement of the remaining proteins from the cluster is more difficult to discern, but could have broader regulatory (FGSG_00040 and FGSG_11657) or enzymatic functions (FGSG_00044 and FGSG_00045). The final C-domain of GRA1 does not possess the expected sequence of a termination CT domain, often implicated in macrocyclization and release of a cyclopeptidein fungal NRPs; and the thioesterase FGSG_00047 may act in concert with the terminal C-domain of GRA1 to catalyze the formation of the macrocyclic anhydride and release of the products. The chain is 2-oxoglutarate-dependent dioxygenase FGSG_00048 from Gibberella zeae (strain ATCC MYA-4620 / CBS 123657 / FGSC 9075 / NRRL 31084 / PH-1) (Wheat head blight fungus).